Consider the following 97-residue polypeptide: YcgL domain-containing protein PP_4590 (97 aa).

Residues 3–87 enclose the YcgL domain; that stretch reads RICSIYKSPR…LEDEYIEHLP (85 aa).

The protein is YcgL domain-containing protein PP_4590 of Pseudomonas putida (strain ATCC 47054 / DSM 6125 / CFBP 8728 / NCIMB 11950 / KT2440).